The chain runs to 469 residues: Aspartyl/glutamyl-tRNA(Asn/Gln) amidotransferase subunit B (469 aa).

It belongs to the GatB/GatE family. GatB subfamily. In terms of assembly, heterotrimer of A, B and C subunits.

It catalyses the reaction L-glutamyl-tRNA(Gln) + L-glutamine + ATP + H2O = L-glutaminyl-tRNA(Gln) + L-glutamate + ADP + phosphate + H(+). The catalysed reaction is L-aspartyl-tRNA(Asn) + L-glutamine + ATP + H2O = L-asparaginyl-tRNA(Asn) + L-glutamate + ADP + phosphate + 2 H(+). Its function is as follows. Allows the formation of correctly charged Asn-tRNA(Asn) or Gln-tRNA(Gln) through the transamidation of misacylated Asp-tRNA(Asn) or Glu-tRNA(Gln) in organisms which lack either or both of asparaginyl-tRNA or glutaminyl-tRNA synthetases. The reaction takes place in the presence of glutamine and ATP through an activated phospho-Asp-tRNA(Asn) or phospho-Glu-tRNA(Gln). The protein is Aspartyl/glutamyl-tRNA(Asn/Gln) amidotransferase subunit B of Methanococcus maripaludis (strain C5 / ATCC BAA-1333).